Consider the following 1051-residue polypeptide: Integrin alpha-3 (1051 aa).

A signal peptide spans 1 to 32; that stretch reads MGPGPRCAPGDPGWMLGALALMVAASGRFAFA. The Extracellular portion of the chain corresponds to 33–991; sequence FNLDTRFLVV…LVEELPAEIE (959 aa). FG-GAP repeat units follow at residues 38-103, 110-171, 185-235, 236-292, 293-354, 356-411, and 415-477; these read RFLV…KDDC, EKSD…DLQL, CNSN…WDLS, EYSY…GGDL, KRKQ…TSFP, QPSL…GLLR, and QIVH…VARP. A glycan (N-linked (GlcNAc...) asparagine) is linked at Asn-86. 3 cysteine pairs are disulfide-bonded: Cys-94-Cys-103, Cys-140-Cys-162, and Cys-185-Cys-197. Residues Asp-315, Asn-317, Asp-319, Asp-323, Asp-378, Asn-380, Asp-382, Asp-386, Asp-439, Asp-441, Asn-443, Tyr-445, and Asp-447 each contribute to the Ca(2+) site. 2 cysteine pairs are disulfide-bonded: Cys-485/Cys-490 and Cys-496/Cys-550. N-linked (GlcNAc...) asparagine glycosylation is found at Asn-500, Asn-511, Asn-573, and Asn-605. Cysteines 615 and 621 form a disulfide. Residues Asn-656, Asn-697, and Asn-841 are each glycosylated (N-linked (GlcNAc...) asparagine). Cysteines 694 and 702 form a disulfide. 2 disulfide bridges follow: Cys-846–Cys-904 and Cys-911–Cys-916. The segment at 860–888 is disordered; it reads LSDPGDKPHSPQRRRRQLDPGGDQGSPPV. Asn-923, Asn-926, Asn-935, and Asn-969 each carry an N-linked (GlcNAc...) asparagine glycan. Residues 992–1019 traverse the membrane as a helical segment; it reads LWLVLVAVSAGLLLLGLIIILLWKCGFF. A GFFKR motif motif is present at residues 1017–1021; sequence GFFKR. The Cytoplasmic segment spans residues 1020 to 1051; the sequence is KRARTRALYEAKRQKAEMKSQPSETERLTDDY.

It belongs to the integrin alpha chain family. As to quaternary structure, heterodimer of an alpha and a beta subunit. The alpha subunit is composed of a heavy and a light chain linked by a disulfide bond. Alpha-3 associates with beta-1. Interacts with HPS5. Interacts with FAP (seprase); the interaction occurs at the cell surface of invadopodia membrane in a collagen-dependent manner. Isoform 1, but not isoform 2, is phosphorylated on serine residues.

The protein resides in the cell membrane. Its subcellular location is the cell projection. It localises to the invadopodium membrane. It is found in the filopodium membrane. Integrin alpha-3/beta-1 is a receptor for fibronectin, laminin, collagen, epiligrin, thrombospondin and CSPG4. Integrin alpha-3/beta-1 provides a docking site for FAP (seprase) at invadopodia plasma membranes in a collagen-dependent manner and hence may participate in the adhesion, formation of invadopodia and matrix degradation processes, promoting cell invasion. Alpha-3/beta-1 may mediate with LGALS3 the stimulation by CSPG4 of endothelial cells migration. This is Integrin alpha-3 (ITGA3) from Cricetulus griseus (Chinese hamster).